We begin with the raw amino-acid sequence, 448 residues long: Probable glycine dehydrogenase (decarboxylating) subunit 1 (448 aa).

This sequence belongs to the GcvP family. N-terminal subunit subfamily. In terms of assembly, the glycine cleavage system is composed of four proteins: P, T, L and H. In this organism, the P 'protein' is a heterodimer of two subunits.

It carries out the reaction N(6)-[(R)-lipoyl]-L-lysyl-[glycine-cleavage complex H protein] + glycine + H(+) = N(6)-[(R)-S(8)-aminomethyldihydrolipoyl]-L-lysyl-[glycine-cleavage complex H protein] + CO2. The glycine cleavage system catalyzes the degradation of glycine. The P protein binds the alpha-amino group of glycine through its pyridoxal phosphate cofactor; CO(2) is released and the remaining methylamine moiety is then transferred to the lipoamide cofactor of the H protein. This Lysinibacillus sphaericus (strain C3-41) protein is Probable glycine dehydrogenase (decarboxylating) subunit 1.